A 393-amino-acid polypeptide reads, in one-letter code: Putative N(4)-(beta-N-acetylglucosaminyl)-L-asparaginase GM21137 (393 aa).

The first 23 residues, 1-23, serve as a signal peptide directing secretion; sequence MRTHLRASLWVLCLASTAFSILA. 2 cysteine pairs are disulfide-bonded: Cys-97–Cys-102 and Cys-196–Cys-212. The active-site Nucleophile is Thr-243. Substrate is bound by residues 271–274 and 294–297; these read RVGD and TGDG. Cys-354 and Cys-381 are joined by a disulfide.

It belongs to the Ntn-hydrolase family. As to quaternary structure, heterotetramer of two alpha and two beta chains arranged as a dimer of alpha/beta heterodimers. In terms of processing, cleaved into an alpha and beta chain by autocatalysis; this activates the enzyme. The N-terminal residue of the beta subunit is responsible for the nucleophile hydrolase activity.

The catalysed reaction is N(4)-(beta-N-acetyl-D-glucosaminyl)-L-asparagine + H2O = N-acetyl-beta-D-glucosaminylamine + L-aspartate + H(+). In terms of biological role, cleaves the GlcNAc-Asn bond which joins oligosaccharides to the peptide of asparagine-linked glycoproteins. This Drosophila sechellia (Fruit fly) protein is Putative N(4)-(beta-N-acetylglucosaminyl)-L-asparaginase GM21137.